A 304-amino-acid polypeptide reads, in one-letter code: Acetylxylan esterase A (304 aa).

Positions 1 to 24 (MLLSTHLLFVITTLVTSLLHPIDG) are cleaved as a signal peptide. Serine 148 acts as the Charge relay system in catalysis. An N-linked (GlcNAc...) asparagine glycan is attached at asparagine 190.

It belongs to the carbohydrate esterase 1 (CE1) family. AxeA subfamily. As to quaternary structure, monomer.

The protein resides in the secreted. The catalysed reaction is Deacetylation of xylans and xylo-oligosaccharides.. Its pathway is glycan degradation; xylan degradation. Inactivated by di-isopropylfluorophosphate and phenylmethylsulfonylfluorid (PMSF), a specific inhibitor of serine esterases. In terms of biological role, acetylxylan esterase involved in the hydrolysis of xylan, a major structural heterogeneous polysaccharide found in plant biomass representing the second most abundant polysaccharide in the biosphere, after cellulose. Degrades acetylated xylans by cleaving acetyl side groups from the hetero-xylan backbone. In Aspergillus awamori (Black koji mold), this protein is Acetylxylan esterase A (axeA).